A 523-amino-acid chain; its full sequence is Excitatory amino acid transporter 3 (523 aa).

Residues 1 to 18 (MGKPTSSGCDWRRFLRNH) lie on the Cytoplasmic side of the membrane. The chain crosses the membrane as a helical span at residues 19–38 (WLLLSTVAAVVLGIVLGVVV). Residues 39–61 (RGHSELSNLDKFYFAFPGEILMR) lie on the Extracellular side of the membrane. The helical transmembrane segment at 62 to 82 (MLKLVILPLIVSSMITGVAAL) threads the bilayer. At 83–93 (DSNVSGKIGLR) the chain is on the cytoplasmic side. A helical membrane pass occupies residues 94-114 (AVVYYFSTTVIAVILGIVLVV). Residues Tyr-98, Thr-101, and Thr-102 each contribute to the Na(+) site. Topologically, residues 115-204 (SIKPGVTQKV…KTKEYKIVGL (90 aa)) are extracellular. N-linked (GlcNAc...) asparagine glycans are attached at residues Asn-128, Asn-178, and Asn-194. The chain crosses the membrane as a helical span at residues 205-228 (YSDGINVLGLIIFCLVFGLVIGKM). Residues 229 to 237 (GEKGQILVD) lie on the Cytoplasmic side of the membrane. A helical transmembrane segment spans residues 238-265 (FFNALSDATMKIVQIIMCYMPIGILFLI). At 266–285 (AGKIIEVEDWEIFRKLGLYM) the chain is on the extracellular side. Residues 286-307 (ATVLSGLAIHSLIVLPLLYFIV) traverse the membrane as a helical segment. Residues 308-312 (VRKNP) are Cytoplasmic-facing. Residues 313-343 (FRFALGMAQALLTALMISSSSATLPVTFRCA) constitute an intramembrane region (discontinuously helical). L-aspartate is bound by residues Ser-330 and Ser-332. The Cytoplasmic portion of the chain corresponds to 344–352 (EEKNQVDKR). A helical transmembrane segment spans residues 353 to 379 (ITRFVLPVGATINMDGTALYEAVAAVF). 4 residues coordinate Na(+): Gly-361, Thr-363, Asn-365, and Asp-367. L-aspartate is bound at residue Thr-369. At 380–392 (IAQLNGLDLSIGQ) the chain is on the extracellular side. Positions 393–426 (IVTISITATAASIGAAGVPQAGLVTMVIVLSAVG) form an intramembrane region, discontinuously helical. Na(+)-binding residues include Ser-404, Ile-405, and Ala-407. Val-410 provides a ligand contact to L-aspartate. Over 427–439 (LPAEDVTLIIAVD) the chain is Extracellular. A helical membrane pass occupies residues 440–461 (WLLDRFRTMVNVLGDAFGTGIV). 3 residues coordinate L-aspartate: Arg-446, Thr-447, and Asn-450. Residues Asn-450 and Asp-454 each contribute to the Na(+) site. Over 462 to 523 (EKLSKKELEQ…TISFTQTSQF (62 aa)) the chain is Cytoplasmic. 2 positions are modified to phosphoserine: Ser-516 and Ser-521.

Belongs to the dicarboxylate/amino acid:cation symporter (DAACS) (TC 2.A.23) family. SLC1A1 subfamily. Homotrimer. Interacts with ARL6IP5. Interacts with RTN2 (via N-terminus); the interaction promotes cell surface expression of SLC1A1. Interacts with SORCS2; this interaction is important for normal expression at the cell membrane. As to expression, detected on neurons in the brain cortex, dentate gyrus and hippocampus CA2 region (at protein level). Expressed in whole brain, brain cortex, hippocampus, cerebellum, lung, kidney, small intestine and skeletal muscle. Expressed in the renal outer medulla, medullary ray and cortex (at protein level).

The protein resides in the cell membrane. The protein localises to the apical cell membrane. Its subcellular location is the synapse. It is found in the synaptosome. It localises to the early endosome membrane. The protein resides in the late endosome membrane. The protein localises to the recycling endosome membrane. It carries out the reaction K(+)(in) + L-glutamate(out) + 3 Na(+)(out) + H(+)(out) = K(+)(out) + L-glutamate(in) + 3 Na(+)(in) + H(+)(in). It catalyses the reaction K(+)(in) + L-aspartate(out) + 3 Na(+)(out) + H(+)(out) = K(+)(out) + L-aspartate(in) + 3 Na(+)(in) + H(+)(in). The catalysed reaction is D-aspartate(out) + K(+)(in) + 3 Na(+)(out) + H(+)(out) = D-aspartate(in) + K(+)(out) + 3 Na(+)(in) + H(+)(in). The enzyme catalyses K(+)(in) + L-cysteine(out) + 3 Na(+)(out) + H(+)(out) = K(+)(out) + L-cysteine(in) + 3 Na(+)(in) + H(+)(in). Sodium-dependent, high-affinity amino acid transporter that mediates the uptake of L-glutamate and also L-aspartate and D-aspartate. Can also transport L-cysteine. Functions as a symporter that transports one amino acid molecule together with two or three Na(+) ions and one proton, in parallel with the counter-transport of one K(+) ion. Mediates Cl(-) flux that is not coupled to amino acid transport; this avoids the accumulation of negative charges due to aspartate and Na(+) symport. Plays an important role in L-glutamate and L-aspartate reabsorption in renal tubuli. Plays a redundant role in the rapid removal of released glutamate from the synaptic cleft, which is essential for terminating the postsynaptic action of glutamate. Contributes to glutathione biosynthesis and protection against oxidative stress via its role in L-glutamate and L-cysteine transport. Negatively regulated by ARL6IP5. The sequence is that of Excitatory amino acid transporter 3 (Slc1a1) from Mus musculus (Mouse).